The sequence spans 413 residues: Palmitoyltransferase ZDHHC6 (413 aa).

Topologically, residues 1-24 (MGTFCSVIKFENLQELKRLCHWGP) are cytoplasmic. The chain crosses the membrane as a helical span at residues 25–45 (IIALGVIAICSTMAMIDSVLW). Over 46 to 57 (YWPLHTTGGSVN) the chain is Lumenal. A helical membrane pass occupies residues 58-78 (FIMLINWTVMILYNYFNAMFV). Residues 79-143 (GPGFVPLGWK…NCCGYQNHAS (65 aa)) lie on the Cytoplasmic side of the membrane. In terms of domain architecture, DHHC spans 99 to 149 (QYCKVCQAYKAPRSHHCRKCNRCVMKMDHHCPWINNCCGYQNHASFTLFLL). Cys129 serves as the catalytic S-palmitoyl cysteine intermediate. The helical transmembrane segment at 144–164 (FTLFLLLAPLGCIHAAFIFVM) threads the bilayer. Topologically, residues 165 to 205 (TMYTQLYHRLSFGWNTVKIDMSAARRDPLPIVPFGLAAFAT) are lumenal. A helical transmembrane segment spans residues 206 to 226 (TLFALGLALGTTIAVGMLFFI). The Cytoplasmic portion of the chain corresponds to 227–413 (QMKIILRNKT…QAPEGEKKNR (187 aa)). Positions 313-398 (VRSVRYKVIE…PRKCVEKCPC (86 aa)) constitute an SH3 domain. 3 S-palmitoyl cysteine lipidation sites follow: Cys328, Cys329, and Cys343. The Di-lysine motif signature appears at 410–413 (KKNR).

This sequence belongs to the DHHC palmitoyltransferase family. As to quaternary structure, homooligomerizes. Interacts with SELENOK. In terms of processing, palmitoylated at 3 different sites by ZDHHC16. The combination of the different palmitoylation events strongly affects the quaternary assembly of ZDHHC6, its localization, stability and function. Palmitoylation at Cys-328 accelerates the turnover of ZDHHC6. Depalmitoylated by LYPLA2.

The protein localises to the endoplasmic reticulum membrane. The catalysed reaction is L-cysteinyl-[protein] + hexadecanoyl-CoA = S-hexadecanoyl-L-cysteinyl-[protein] + CoA. It catalyses the reaction L-cysteinyl-[protein] + octadecanoyl-CoA = S-octadecanoyl-L-cysteinyl-[protein] + CoA. Functionally, endoplasmic reticulum palmitoyl acyltransferase that mediates palmitoylation of proteins such as AMFR, CALX, ITPR1 and TFRC. Palmitoylates calnexin (CALX), which is required for its association with the ribosome-translocon complex and efficient folding of glycosylated proteins. Mediates palmitoylation of AMFR, promoting AMFR distribution to the peripheral endoplasmic reticulum. Together with SELENOK, palmitoylates ITPR1 in immune cells, leading to regulate ITPR1 stability and function. Stearoyltransferase that mediates stearoylation of TFRC to inhibit TFRC-mediated activation of the JNK pathway and mitochondrial fragmentation. The protein is Palmitoyltransferase ZDHHC6 of Homo sapiens (Human).